Consider the following 606-residue polypeptide: Leucine-rich repeat and immunoglobulin-like domain-containing nogo receptor-interacting protein 2 (606 aa).

The N-terminal stretch at 1–27 (MLHTAISCWQPFLGLAVVLIFMGSTIG) is a signal peptide. In terms of domain architecture, LRRNT spans 28-57 (CPARCECSAQNKSVSCHRRRLIAIPEGIPI). Residues 28–545 (CPARCECSAQ…LDLKTILVST (518 aa)) are Extracellular-facing. N-linked (GlcNAc...) asparagine glycosylation is present at Asn38. LRR repeat units lie at residues 58–79 (ETKI…EFIS), 82–103 (LLEE…AFNN), 106–127 (NLRS…VFTG), 130–151 (NLTK…MFQD), 154–175 (NLKS…AFSG), 178–199 (SLEQ…ALSH), 202–223 (SLIS…AFKR), 226–247 (HLKH…NSLY), 250–271 (NLTS…AFKH), 274–295 (YLTH…MFSD), 298–319 (RLQE…SFQG), and 322–343 (FLRV…VFSS). Residue Asn130 is glycosylated (N-linked (GlcNAc...) asparagine). N-linked (GlcNAc...) asparagine glycosylation is present at Asn188. The N-linked (GlcNAc...) asparagine glycan is linked to Asn279. An N-linked (GlcNAc...) asparagine glycan is attached at Asn327. Positions 355–409 (NPLACDCRLLWILQRQPTLQFGGQQPMCAGPDTIRERSFKDFHSTALSFYFTCKK) constitute an LRRCT domain. The region spanning 410 to 499 (PKIREKKLQH…GNDTFTASLT (90 aa)) is the Ig-like C2-type domain. Cys432 and Cys483 are joined by a disulfide. Residues 546–566 (AMGCFTFLGVVLFCFLLLFVW) form a helical membrane-spanning segment. Topologically, residues 567 to 606 (SRGKGKHKNSIDLEYVPRKNNGAVVEGEVAGPRRFNMKMI) are cytoplasmic.

Its subcellular location is the membrane. This is Leucine-rich repeat and immunoglobulin-like domain-containing nogo receptor-interacting protein 2 (LINGO2) from Homo sapiens (Human).